The following is a 152-amino-acid chain: Deoxyuridine 5'-triphosphate nucleotidohydrolase (152 aa).

Residues Arg72–Gly74, Asn85, and Thr89–Asp91 contribute to the substrate site.

It belongs to the dUTPase family. Requires Mg(2+) as cofactor.

It catalyses the reaction dUTP + H2O = dUMP + diphosphate + H(+). It participates in pyrimidine metabolism; dUMP biosynthesis; dUMP from dCTP (dUTP route): step 2/2. Its function is as follows. This enzyme is involved in nucleotide metabolism: it produces dUMP, the immediate precursor of thymidine nucleotides and it decreases the intracellular concentration of dUTP so that uracil cannot be incorporated into DNA. The sequence is that of Deoxyuridine 5'-triphosphate nucleotidohydrolase from Rhodopseudomonas palustris (strain BisB18).